A 320-amino-acid chain; its full sequence is Malate dehydrogenase (320 aa).

NAD(+) contacts are provided by residues 10 to 15 (GSGMIG) and Asp-34. Positions 83 and 89 each coordinate substrate. Residues Asn-96 and 119–121 (ITN) contribute to the NAD(+) site. 2 residues coordinate substrate: Asn-121 and Arg-152. His-176 (proton acceptor) is an active-site residue.

Belongs to the LDH/MDH superfamily. MDH type 3 family.

It carries out the reaction (S)-malate + NAD(+) = oxaloacetate + NADH + H(+). Functionally, catalyzes the reversible oxidation of malate to oxaloacetate. The chain is Malate dehydrogenase from Rhizobium rhizogenes (strain K84 / ATCC BAA-868) (Agrobacterium radiobacter).